The following is a 225-amino-acid chain: PKHD-type hydroxylase YbiX (225 aa).

The Fe2OG dioxygenase domain occupies 78-177; it reads TLSTPLFNRY…RVASFMWIQS (100 aa). Fe cation-binding residues include His-96, Asp-98, and His-158. Arg-168 provides a ligand contact to 2-oxoglutarate.

Fe(2+) is required as a cofactor. It depends on L-ascorbate as a cofactor.

This chain is PKHD-type hydroxylase YbiX, found in Escherichia coli O17:K52:H18 (strain UMN026 / ExPEC).